The sequence spans 746 residues: Polyribonucleotide nucleotidyltransferase (746 aa).

Residues aspartate 520 and aspartate 526 each contribute to the Mg(2+) site. A KH domain is found at 586-648; it reads PRIITVKVPV…EAARAAVNAI (63 aa). The S1 motif domain occupies 657–729; it reads GERYLGTVVK…PRGKLSLVPV (73 aa).

The protein belongs to the polyribonucleotide nucleotidyltransferase family. It depends on Mg(2+) as a cofactor.

It localises to the cytoplasm. The catalysed reaction is RNA(n+1) + phosphate = RNA(n) + a ribonucleoside 5'-diphosphate. Its function is as follows. Involved in mRNA degradation. Catalyzes the phosphorolysis of single-stranded polyribonucleotides processively in the 3'- to 5'-direction. In Kineococcus radiotolerans (strain ATCC BAA-149 / DSM 14245 / SRS30216), this protein is Polyribonucleotide nucleotidyltransferase.